Consider the following 459-residue polypeptide: Bifunctional protein GlmU (459 aa).

Residues 1–230 (MSNRFAVILA…FDETLGVNDR (230 aa)) form a pyrophosphorylase region. UDP-N-acetyl-alpha-D-glucosamine-binding positions include 9 to 12 (LAAG), Lys23, Gln73, and 78 to 79 (GT). Asp103 provides a ligand contact to Mg(2+). UDP-N-acetyl-alpha-D-glucosamine is bound by residues Gly140, Glu155, Asn170, and Asn228. A Mg(2+)-binding site is contributed by Asn228. The interval 231–251 (VALSQAEIIMKNRINRKNMVN) is linker. The interval 252 to 459 (GVTIIDPSNT…VDQLLNKKKS (208 aa)) is N-acetyltransferase. The UDP-N-acetyl-alpha-D-glucosamine site is built by Arg333 and Lys351. The Proton acceptor role is filled by His363. Residues Tyr366 and Asn377 each coordinate UDP-N-acetyl-alpha-D-glucosamine. Residues 386–387 (NY), Ala423, and Arg440 contribute to the acetyl-CoA site.

In the N-terminal section; belongs to the N-acetylglucosamine-1-phosphate uridyltransferase family. The protein in the C-terminal section; belongs to the transferase hexapeptide repeat family. In terms of assembly, homotrimer. Requires Mg(2+) as cofactor.

The protein localises to the cytoplasm. The catalysed reaction is alpha-D-glucosamine 1-phosphate + acetyl-CoA = N-acetyl-alpha-D-glucosamine 1-phosphate + CoA + H(+). It carries out the reaction N-acetyl-alpha-D-glucosamine 1-phosphate + UTP + H(+) = UDP-N-acetyl-alpha-D-glucosamine + diphosphate. The protein operates within nucleotide-sugar biosynthesis; UDP-N-acetyl-alpha-D-glucosamine biosynthesis; N-acetyl-alpha-D-glucosamine 1-phosphate from alpha-D-glucosamine 6-phosphate (route II): step 2/2. It participates in nucleotide-sugar biosynthesis; UDP-N-acetyl-alpha-D-glucosamine biosynthesis; UDP-N-acetyl-alpha-D-glucosamine from N-acetyl-alpha-D-glucosamine 1-phosphate: step 1/1. It functions in the pathway bacterial outer membrane biogenesis; LPS lipid A biosynthesis. Catalyzes the last two sequential reactions in the de novo biosynthetic pathway for UDP-N-acetylglucosamine (UDP-GlcNAc). The C-terminal domain catalyzes the transfer of acetyl group from acetyl coenzyme A to glucosamine-1-phosphate (GlcN-1-P) to produce N-acetylglucosamine-1-phosphate (GlcNAc-1-P), which is converted into UDP-GlcNAc by the transfer of uridine 5-monophosphate (from uridine 5-triphosphate), a reaction catalyzed by the N-terminal domain. This chain is Bifunctional protein GlmU, found in Bacillus cereus (strain G9842).